A 280-amino-acid polypeptide reads, in one-letter code: Probable protein VP2 (280 aa).

Disordered stretches follow at residues 46 to 167 (LGAG…FFTS) and 200 to 280 (AQLS…TYSN). Pro residues predominate over residues 65–81 (PEGPGGPPQHAPPNPPP). The span at 90–100 (RGGGAGGAGDG) shows a compositional bias: gly residues. Residues 106 to 117 (DAAEEYGPEDLD) are compositionally biased toward acidic residues. The segment covering 227-251 (AKTRRRVKKKPLSSKNKHTKKKKRS) has biased composition (basic residues). Residues 252-266 (YSSSSPSSKDNTSES) are compositionally biased toward low complexity.

Post-translationally, phosphorylated at C-terminal serines.

The chain is Probable protein VP2 from Homo sapiens (Human).